The chain runs to 1377 residues: Neogenin (1377 aa).

The N-terminal stretch at 1 to 2 (AA) is a signal peptide. The Extracellular portion of the chain corresponds to 3-1074 (AKNGSPPQSA…PTSPLDSNML (1072 aa)). Ig-like C2-type domains lie at 21-114 (PLYF…RTAK), 121-206 (PRFT…EAEL), 198-305 (PKFS…AELT), and 310-395 (PEFL…AQLI). The N-linked (GlcNAc...) asparagine glycan is linked to N42. Cystine bridges form between C43–C98, C142–C190, and C239–C289. An N-linked (GlcNAc...) asparagine glycan is attached at N179. N-linked (GlcNAc...) asparagine glycosylation is present at N295. C331 and C379 are disulfide-bonded. Fibronectin type-III domains are found at residues 410–504 (APRD…TQPE), 510–600 (PAPN…TLSD), 605–700 (APQN…TFES), 710–800 (VPSS…RPHT), 825–924 (PPVG…LVPT), and 926–1023 (PPKD…TPKA). 2 N-linked (GlcNAc...) asparagine glycosylation sites follow: N439 and N458. 2 N-linked (GlcNAc...) asparagine glycosylation sites follow: N608 and N684. N878 carries N-linked (GlcNAc...) asparagine glycosylation. Residues 1010 to 1066 (GPMSEAVQFRTPKADSSDKMPNDQALGSAGKGGRLPDLGSDYKPPMSGSNSPHGSPT) are disordered. Residues 1021 to 1030 (PKADSSDKMP) show a composition bias toward basic and acidic residues. Over residues 1056–1066 (SGSNSPHGSPT) the composition is skewed to polar residues. The helical transmembrane segment at 1075-1095 (LVIIVSIGVITIVVVVIIAVF) threads the bilayer. Residues 1096-1377 (CTRRTTSHQK…MKDLNAITTA (282 aa)) are Cytoplasmic-facing. The tract at residues 1143-1281 (PIDKSPDPNP…SHPLKSFAVP (139 aa)) is disordered. Phosphoserine is present on residues S1147 and S1163. Composition is skewed to polar residues over residues 1160–1176 (PRNS…MDSN), 1213–1238 (QPPQ…TCCT), and 1246–1265 (ATSS…QSLP). T1167 bears the Phosphothreonine mark. S1317 is modified (phosphoserine). Residue T1320 is modified to Phosphothreonine. Phosphoserine occurs at positions 1348, 1350, and 1351.

This sequence belongs to the immunoglobulin superfamily. DCC family. Interacts with MYO10. Interacts with RGMA and RGMB. Interacts with BMP2, BMP4, BMP6, and BMP7.

The protein resides in the cell membrane. Its function is as follows. Multi-functional cell surface receptor regulating cell adhesion in many diverse developmental processes, including neural tube and mammary gland formation, myogenesis and angiogenesis. Receptor for members of the BMP, netrin, and repulsive guidance molecule (RGM) families. Netrin-Neogenin interactions result in a chemoattractive axon guidance response and cell-cell adhesion, the interaction between NEO1/Neogenin and RGMa and RGMb induces a chemorepulsive response. This is Neogenin (Neo1) from Rattus norvegicus (Rat).